A 212-amino-acid polypeptide reads, in one-letter code: Stringent starvation protein A (212 aa).

Residues 9-87 (SVMTLFSGPT…YLDERFPHPP (79 aa)) enclose the GST N-terminal domain. The GST C-terminal domain maps to 92–209 (YPVARGESRL…LTEAEREMRL (118 aa)).

Belongs to the GST superfamily. HSP26 family.

Functionally, forms an equimolar complex with the RNA polymerase holoenzyme (RNAP) but not with the core enzyme. This chain is Stringent starvation protein A (sspA), found in Escherichia coli O157:H7.